The sequence spans 774 residues: Lysyl oxidase homolog 2 (774 aa).

An N-terminal signal peptide occupies residues 1 to 25 (MERRGSSCLCRCLALLALLPTLSLA). 4 SRCR domains span residues 58–159 (LRLA…VVCS), 188–302 (IRAI…VSCV), 326–425 (VRLR…VRCN), and 435–544 (LRLN…VACS). 9 disulfide bridges follow: Cys84–Cys148, Cys97–Cys158, Cys128–Cys138, Cys218–Cys291, Cys231–Cys301, Cys265–Cys275, Cys351–Cys414, Cys364–Cys424, and Cys395–Cys405. The N-linked (GlcNAc...) asparagine glycan is linked to Asn288. Asn455 carries an N-linked (GlcNAc...) asparagine glycan. 3 disulfide bridges follow: Cys464/Cys530, Cys477/Cys543, and Cys511/Cys521. The tract at residues 548-751 (PDLVLNAEIV…WMYNCHIGGS (204 aa)) is lysyl-oxidase like. Ca(2+) contacts are provided by Asp549 and Leu550. Cystine bridges form between Cys573-Cys625, Cys579-Cys695, Cys657-Cys673, and Cys663-Cys685. His626, His628, and His630 together coordinate Cu cation. N-linked (GlcNAc...) asparagine glycosylation occurs at Asn644. Residues 653–689 (KASFCLEDTECEGDIQKSYECANFGEQGITMGCWDMY) constitute a cross-link (lysine tyrosylquinone (Lys-Tyr)). Tyr689 is modified (2',4',5'-topaquinone). Ca(2+) contacts are provided by Glu722, Asp724, Asn727, and Asn728. Cys732 and Cys746 form a disulfide bridge.

It belongs to the lysyl oxidase family. In terms of assembly, component of some chromatin repressor complex. Interacts with SNAI1. Interacts with TAF10. Interacts with HSPA5. Interacts with EFEMP2. Cu cation serves as cofactor. Requires lysine tyrosylquinone residue as cofactor. Post-translationally, the lysine tyrosylquinone cross-link (LTQ) is generated by condensation of the epsilon-amino group of a lysine with a topaquinone produced by oxidation of tyrosine. N-glycosylated. N-glycosylation on Asn-455 and Asn-644 may be essential for proper folding and secretion; may be composed of a fucosylated carbohydrates attached to a trimannose N-linked glycan core.

It is found in the secreted. The protein resides in the extracellular space. It localises to the extracellular matrix. Its subcellular location is the basement membrane. The protein localises to the nucleus. It is found in the chromosome. The protein resides in the endoplasmic reticulum. It catalyses the reaction L-lysyl-[protein] + O2 + H2O = (S)-2-amino-6-oxohexanoyl-[protein] + H2O2 + NH4(+). With respect to regulation, specifically inhibited by a mouse monoclonal antibody AB0023, inhibition occurs in a non-competitive manner. In terms of biological role, mediates the post-translational oxidative deamination of lysine residues on target proteins leading to the formation of deaminated lysine (allysine). Acts as a transcription corepressor and specifically mediates deamination of trimethylated 'Lys-4' of histone H3 (H3K4me3), a specific tag for epigenetic transcriptional activation. Shows no activity against histone H3 when it is trimethylated on 'Lys-9' (H3K9me3) or 'Lys-27' (H3K27me3) or when 'Lys-4' is monomethylated (H3K4me1) or dimethylated (H3K4me2). Also mediates deamination of methylated TAF10, a member of the transcription factor IID (TFIID) complex, which induces release of TAF10 from promoters, leading to inhibition of TFIID-dependent transcription. LOXL2-mediated deamination of TAF10 results in transcriptional repression of genes required for embryonic stem cell pluripotency including POU5F1/OCT4, NANOG, KLF4 and SOX2. Involved in epithelial to mesenchymal transition (EMT) via interaction with SNAI1 and participates in repression of E-cadherin CDH1, probably by mediating deamination of histone H3. During EMT, involved with SNAI1 in negatively regulating pericentromeric heterochromatin transcription. SNAI1 recruits LOXL2 to pericentromeric regions to oxidize histone H3 and repress transcription which leads to release of heterochromatin component CBX5/HP1A, enabling chromatin reorganization and acquisition of mesenchymal traits. Interacts with the endoplasmic reticulum protein HSPA5 which activates the IRE1-XBP1 pathway of the unfolded protein response, leading to expression of several transcription factors involved in EMT and subsequent EMT induction. When secreted into the extracellular matrix, promotes cross-linking of extracellular matrix proteins by mediating oxidative deamination of peptidyl lysine residues in precursors to fibrous collagen and elastin. Acts as a regulator of sprouting angiogenesis, probably via collagen IV scaffolding. Acts as a regulator of chondrocyte differentiation, probably by regulating expression of factors that control chondrocyte differentiation. The chain is Lysyl oxidase homolog 2 (LOXL2) from Bos taurus (Bovine).